The primary structure comprises 1360 residues: DNA-directed RNA polymerase subunit beta (1360 aa).

It belongs to the RNA polymerase beta chain family. As to quaternary structure, the RNAP catalytic core consists of 2 alpha, 1 beta, 1 beta' and 1 omega subunit. When a sigma factor is associated with the core the holoenzyme is formed, which can initiate transcription.

It catalyses the reaction RNA(n) + a ribonucleoside 5'-triphosphate = RNA(n+1) + diphosphate. DNA-dependent RNA polymerase catalyzes the transcription of DNA into RNA using the four ribonucleoside triphosphates as substrates. This Teredinibacter turnerae (strain ATCC 39867 / T7901) protein is DNA-directed RNA polymerase subunit beta.